Consider the following 197-residue polypeptide: uncharacterized protein (197 aa).

An N-terminal signal peptide occupies residues 1–30 (MSTYIIINIALLIAIVALIFFLSKKTKSEA).

This is an uncharacterized protein from Acanthamoeba polyphaga (Amoeba).